A 238-amino-acid chain; its full sequence is Ribosomal RNA small subunit methyltransferase G (238 aa).

S-adenosyl-L-methionine is bound by residues G77, F82, 128–129, and R147; that span reads AE.

It belongs to the methyltransferase superfamily. RNA methyltransferase RsmG family.

Its subcellular location is the cytoplasm. Specifically methylates the N7 position of guanine in position 535 of 16S rRNA. In Geobacillus sp. (strain WCH70), this protein is Ribosomal RNA small subunit methyltransferase G.